The primary structure comprises 96 residues: Protein C4 (96 aa).

Gly2 carries N-myristoyl glycine; by host lipidation. A disordered region spans residues 66–96 (STDDLQGEDSRQPMTLTPRQLTQEVSRRLLM). Residues 77–89 (QPMTLTPRQLTQE) are compositionally biased toward polar residues.

This sequence belongs to the geminiviridae protein AC4/C4 family.

It localises to the host cell membrane. In terms of biological role, pathogenicity determinant. May act as a suppressor of RNA-mediated gene silencing, also known as post-transcriptional gene silencing (PTGS), a mechanism of plant viral defense that limits the accumulation of viral RNAs. The protein is Protein C4 of Cynanchum acutum (Tomato).